Reading from the N-terminus, the 229-residue chain is MAKKKAFTPLFYLASIVFLPWWISFSVNKCLESWVTNWWNTGQSEIFLNNIQEKSLLEKFIELEELLLLDEMIKEYSETHLEEFGIGIHKETIQLIKIQNENRIHTILHFSTNIICFIILSGYSILGNEKLVILNSWAQEFLYNLSDTVKAFSILLLTDLCIGFHSPHGWELMIGSIYKDFGFVHNDQIISGLVSTFPVILDTIFKYWIFRYLNRLSPSLVVIYHSMND.

3 helical membrane-spanning segments follow: residues 7–27 (FTPL…SFSV), 107–127 (ILHF…SILG), and 189–209 (IISG…KYWI).

It belongs to the CemA family.

The protein resides in the plastid. It localises to the chloroplast inner membrane. It carries out the reaction K(+)(in) + H(+)(out) = K(+)(out) + H(+)(in). In terms of biological role, contributes to K(+)/H(+) antiport activity by supporting proton efflux to control proton extrusion and homeostasis in chloroplasts in a light-dependent manner to modulate photosynthesis. Prevents excessive induction of non-photochemical quenching (NPQ) under continuous-light conditions. Indirectly promotes efficient inorganic carbon uptake into chloroplasts. This is Potassium/proton antiporter CemA from Atropa belladonna (Belladonna).